A 172-amino-acid polypeptide reads, in one-letter code: WW domain binding protein VOPP1 (172 aa).

The signal sequence occupies residues Met1–Ala22. The Extracellular segment spans residues Lys23–Leu60. A helical membrane pass occupies residues Trp61–Ile81. Over Arg82 to Lys172 the chain is Cytoplasmic. The disordered stretch occupies residues Gln139–Lys172. Pro residues predominate over residues Tyr151–Tyr165.

This sequence belongs to the VOPP1/ECOP family. As to quaternary structure, interacts with WWOX (via WW domain).

It is found in the cytoplasmic vesicle membrane. The protein resides in the late endosome membrane. It localises to the lysosome membrane. Increases the transcriptional activity of NFKB1 by facilitating its nuclear translocation, DNA-binding and associated apoptotic response, when overexpressed. May sequester WWOX in lysosomal vesicles and thereby regulate WWOX role as tumor suppressor. This Rattus norvegicus (Rat) protein is WW domain binding protein VOPP1.